The primary structure comprises 404 residues: Sorting nexin-32 (404 aa).

Positions 1 to 10 (MEEQHQEAGN) are enriched in basic and acidic residues. Residues 1–29 (MEEQHQEAGNESKPSSTSVDLQGDSPLQV) are disordered. Positions 11–20 (ESKPSSTSVD) are enriched in polar residues. One can recognise a PX domain in the interval 21–168 (LQGDSPLQVE…SVFLEYSQDL (148 aa)). Residues 255–336 (TQEVNQLKRS…KARTRNREVR (82 aa)) adopt a coiled-coil conformation.

This sequence belongs to the sorting nexin family.

Functionally, may be involved in several stages of intracellular trafficking. This is Sorting nexin-32 (Snx32) from Mus musculus (Mouse).